Consider the following 315-residue polypeptide: Shiga toxin subunit A (315 aa).

Positions 1-22 (MKIIIFRVLTFFFVIFSVNVVA) are cleaved as a signal peptide. The A1 stretch occupies residues 23–273 (KEFTLDFSTA…CHHHASRVAR (251 aa)). The active site involves glutamate 189. Cysteine 264 and cysteine 283 are disulfide-bonded. The segment at 274 to 315 (MASDEFPSMCPADGRVRGITHNKILWDSSTLGAILMRRTISS) is A2.

Belongs to the ribosome-inactivating protein family. As to quaternary structure, shiga toxin contains a single subunit A and five copies of subunit B.

It catalyses the reaction Endohydrolysis of the N-glycosidic bond at one specific adenosine on the 28S rRNA.. In terms of biological role, the A subunit is responsible for inhibiting protein synthesis through the catalytic inactivation of 60S ribosomal subunits. After endocytosis, the A subunit is cleaved by furin in two fragments, A1 and A2: A1 is the catalytically active fragment, and A2 is essential for holotoxin assembly with the B subunits. The sequence is that of Shiga toxin subunit A (stxA) from Shigella sonnei (Shigella sonnei bacteriophage 7888).